Consider the following 97-residue polypeptide: Putative defensin-like protein 237 (97 aa).

A signal peptide spans 1-23; it reads MRHATSPIVFCFLIFLVMNHVKG. 4 disulfide bridges follow: Cys-30–Cys-94, Cys-40–Cys-71, Cys-48–Cys-84, and Cys-69–Cys-86.

The protein belongs to the DEFL family.

The protein localises to the secreted. This chain is Putative defensin-like protein 237 (SCRL21), found in Arabidopsis thaliana (Mouse-ear cress).